We begin with the raw amino-acid sequence, 402 residues long: Tryptophan synthase beta chain (402 aa).

Residue lysine 88 is modified to N6-(pyridoxal phosphate)lysine.

This sequence belongs to the TrpB family. Tetramer of two alpha and two beta chains. Requires pyridoxal 5'-phosphate as cofactor.

The catalysed reaction is (1S,2R)-1-C-(indol-3-yl)glycerol 3-phosphate + L-serine = D-glyceraldehyde 3-phosphate + L-tryptophan + H2O. It functions in the pathway amino-acid biosynthesis; L-tryptophan biosynthesis; L-tryptophan from chorismate: step 5/5. Its function is as follows. The beta subunit is responsible for the synthesis of L-tryptophan from indole and L-serine. This Pasteurella multocida (strain Pm70) protein is Tryptophan synthase beta chain (trpB).